We begin with the raw amino-acid sequence, 485 residues long: GTPase Der (485 aa).

EngA-type G domains lie at 3 to 167 (PTIA…PEPE) and 176 to 349 (PVFA…NAAM). GTP contacts are provided by residues 9-16 (GRPNVGKS), 56-60 (DTGGF), 119-122 (NKGE), 182-189 (GRPNVGKS), 229-233 (DTAGV), and 294-297 (NKWD). A KH-like domain is found at 350–434 (IKMPTPKITR…PLRIQYNVSE (85 aa)). The interval 435 to 485 (NPYENAEDKPKKKPLRRVSLSNRIEKREGRKEEKNRFKKKTKVSVKKQFSK) is disordered. Residues 457 to 469 (RIEKREGRKEEKN) are compositionally biased toward basic and acidic residues. Residues 470-485 (RFKKKTKVSVKKQFSK) are compositionally biased toward basic residues.

The protein belongs to the TRAFAC class TrmE-Era-EngA-EngB-Septin-like GTPase superfamily. EngA (Der) GTPase family. As to quaternary structure, associates with the 50S ribosomal subunit.

In terms of biological role, GTPase that plays an essential role in the late steps of ribosome biogenesis. This Neisseria meningitidis serogroup C / serotype 2a (strain ATCC 700532 / DSM 15464 / FAM18) protein is GTPase Der.